Reading from the N-terminus, the 328-residue chain is Protoheme IX farnesyltransferase (328 aa).

Helical transmembrane passes span 31-51, 53-73, 120-140, 153-173, 181-201, 226-246, 250-270, and 285-305; these read IILL…KGEV, LFLL…ANAI, VFAN…YVGV, IVIG…AVTG, LLFA…AIYI, IWVY…PLHV, IYAV…WQLL, and YSIY…LPFT.

Belongs to the UbiA prenyltransferase family. Protoheme IX farnesyltransferase subfamily.

It localises to the cell inner membrane. The catalysed reaction is heme b + (2E,6E)-farnesyl diphosphate + H2O = Fe(II)-heme o + diphosphate. It functions in the pathway porphyrin-containing compound metabolism; heme O biosynthesis; heme O from protoheme: step 1/1. Converts heme B (protoheme IX) to heme O by substitution of the vinyl group on carbon 2 of heme B porphyrin ring with a hydroxyethyl farnesyl side group. The chain is Protoheme IX farnesyltransferase from Trichodesmium erythraeum (strain IMS101).